Consider the following 267-residue polypeptide: Cell division protein FtsQ (267 aa).

Over 1-32 the chain is Cytoplasmic; it reads MRKKTSSNKKKQTKKTNNISLRRKLGLMYKKA. A helical transmembrane segment spans residues 33–53; sequence ILGLKIALIIFVCLFVFTKYF. Over 54-267 the chain is Periplasmic; that stretch reads AGIKTYLTTN…DKNKYYIEKY (214 aa). In terms of domain architecture, POTRA spans 73-141; sequence FKLENVIIEG…NTVYIKLFER (69 aa).

This sequence belongs to the FtsQ/DivIB family. FtsQ subfamily.

It is found in the cell inner membrane. In terms of biological role, essential cell division protein. The chain is Cell division protein FtsQ from Rickettsia conorii (strain ATCC VR-613 / Malish 7).